Consider the following 150-residue polypeptide: Cytochrome c-type biogenesis protein CcmE (150 aa).

At 1–7 (MTRKQKR) the chain is on the cytoplasmic side. Residues 8-28 (LAIIGGGVGFLTAAVLLVMFA) traverse the membrane as a helical; Signal-anchor for type II membrane protein segment. Residues 29–150 (FSQAVAYFYV…VTLGGEENIR (122 aa)) are Periplasmic-facing. Histidine 123 and tyrosine 127 together coordinate heme.

This sequence belongs to the CcmE/CycJ family.

It localises to the cell inner membrane. Heme chaperone required for the biogenesis of c-type cytochromes. Transiently binds heme delivered by CcmC and transfers the heme to apo-cytochromes in a process facilitated by CcmF and CcmH. The sequence is that of Cytochrome c-type biogenesis protein CcmE from Sinorhizobium medicae (strain WSM419) (Ensifer medicae).